We begin with the raw amino-acid sequence, 43 residues long: uncharacterized protein (43 aa).

Residues Ser21–Phe41 traverse the membrane as a helical segment.

It belongs to the SscA family.

Its subcellular location is the membrane. This is an uncharacterized protein from Bacillus subtilis (strain 168).